A 513-amino-acid chain; its full sequence is Mannan endo-1,4-beta-mannosidase A and B (513 aa).

The first 26 residues, 1 to 26, serve as a signal peptide directing secretion; the sequence is MKVYKKVAFVMAFIMFFSVLPTISMS. A GH26 domain is found at 41-353; that stretch reads QTTKNVYSWL…FNDSWVVNRG (313 aa). H132 is a substrate binding site. Residue E195 is the Proton donor of the active site. Positions 200 and 270 each coordinate substrate. The active-site Nucleophile is the E295. Position 429–430 (429–430) interacts with substrate; that stretch reads IK.

It belongs to the glycosyl hydrolase 26 family.

It localises to the secreted. It catalyses the reaction Random hydrolysis of (1-&gt;4)-beta-D-mannosidic linkages in mannans, galactomannans and glucomannans.. Could be involved in the degradation of glucomannan and catalyzes the endo hydrolysis of beta-1,4-linked mannan, galactomannan and glucomannan. The polypeptide is Mannan endo-1,4-beta-mannosidase A and B (Caldalkalibacillus mannanilyticus (strain DSM 16130 / CIP 109019 / JCM 10596 / AM-001) (Bacillus mannanilyticus)).